We begin with the raw amino-acid sequence, 530 residues long: Probable ATP-binding protein YbiT (530 aa).

ABC transporter domains lie at 2–252 and 320–526; these read LVSS…ERLL and LEVE…YLRS. Residues 34–41 and 352–359 contribute to the ATP site; these read GANGSGKS and GTNGVGKS.

The protein belongs to the ABC transporter superfamily. ABCF family. YbiT subfamily.

The protein is Probable ATP-binding protein YbiT (ybiT) of Escherichia coli O157:H7.